A 278-amino-acid chain; its full sequence is Probable NADP-dependent mannitol dehydrogenase (278 aa).

NADP(+)-binding residues include I45, N117, and K152. Residues S171 and Y186 each act as proton donor in the active site. 3 residues coordinate NADP(+): Y186, K190, and T220. K190 serves as the catalytic Lowers pKa of active site Tyr.

The protein belongs to the short-chain dehydrogenases/reductases (SDR) family. Homotetramer.

It carries out the reaction D-mannitol + NADP(+) = D-fructose + NADPH + H(+). In terms of biological role, versatile oxidoreductase that catalyzes the oxidation and reduction of polar as well as non-polar substrates at a very broad pH range. Preferentially oxidizes secondary alcohols. Has highest activity for racemic 2-heptanol and racemic octanol. Is also an efficient reductase for selected substrates. Substrate selectivity was found for medium chain length ketones with the carbonyl function at position C-2. Has highest activities for ribulose and fructose. The enzyme is (R)-selective in the reduction direction and produces exclusively the (R)-enantiomer. This chain is Probable NADP-dependent mannitol dehydrogenase, found in Yarrowia lipolytica (strain CLIB 122 / E 150) (Yeast).